We begin with the raw amino-acid sequence, 146 residues long: 16.0 kDa heat shock protein, peroxisomal (146 aa).

Positions 23–143 constitute a sHSP domain; it reads WASASATAAM…RPRTRPIAVS (121 aa). The Microbody targeting signal signature appears at 144 to 146; the sequence is SKL.

The protein belongs to the small heat shock protein (HSP20) family. As to quaternary structure, may form oligomeric structures.

It is found in the peroxisome. This chain is 16.0 kDa heat shock protein, peroxisomal (HSP16.0), found in Oryza sativa subsp. japonica (Rice).